Here is a 382-residue protein sequence, read N- to C-terminus: Anhydro-N-acetylmuramic acid kinase (382 aa).

22–29 (GTSMDGVD) contacts ATP.

This sequence belongs to the anhydro-N-acetylmuramic acid kinase family.

It carries out the reaction 1,6-anhydro-N-acetyl-beta-muramate + ATP + H2O = N-acetyl-D-muramate 6-phosphate + ADP + H(+). Its pathway is amino-sugar metabolism; 1,6-anhydro-N-acetylmuramate degradation. It functions in the pathway cell wall biogenesis; peptidoglycan recycling. Catalyzes the specific phosphorylation of 1,6-anhydro-N-acetylmuramic acid (anhMurNAc) with the simultaneous cleavage of the 1,6-anhydro ring, generating MurNAc-6-P. Is required for the utilization of anhMurNAc either imported from the medium or derived from its own cell wall murein, and thus plays a role in cell wall recycling. This chain is Anhydro-N-acetylmuramic acid kinase, found in Burkholderia vietnamiensis (strain G4 / LMG 22486) (Burkholderia cepacia (strain R1808)).